An 82-amino-acid chain; its full sequence is Putative membrane protein insertion efficiency factor (82 aa).

The disordered stretch occupies residues 63 to 82 (PGGHDPVPESTILSKEKSVK).

It belongs to the UPF0161 family.

Its subcellular location is the cell inner membrane. In terms of biological role, could be involved in insertion of integral membrane proteins into the membrane. This is Putative membrane protein insertion efficiency factor from Protochlamydia amoebophila (strain UWE25).